The chain runs to 1021 residues: Translation initiation factor IF-2 (1021 aa).

Positions 50–422 are disordered; the sequence is AFPAEGGSAS…RMGAMVPRGN (373 aa). Gly residues predominate over residues 57 to 71; it reads SASGGRPGGRPGPGN. The segment covering 75–95 has biased composition (pro residues); sequence PAPPRPGLAPRPGPRPVPGRP. Low complexity predominate over residues 96-112; it reads GPAARPGGPAAPSAPAA. The span at 113-129 shows a compositional bias: pro residues; it reads PSAPAPGAPAASPPASQ. 3 stretches are compositionally biased toward low complexity: residues 130–159, 167–178, and 187–196; these read PRPI…ASGP, GGPAAPGRARPG, and SAPSAPSAGG. Over residues 198–208 the composition is skewed to pro residues; that stretch reads RPGPRPGPRPS. The span at 219 to 233 shows a compositional bias: low complexity; it reads SAGPRQSAGQSGSGP. Composition is skewed to pro residues over residues 234 to 254 and 262 to 273; these read ASPP…PRPG and RPSPGSMPPRPG. 2 stretches are compositionally biased toward gly residues: residues 275 to 291 and 306 to 389; these read RPGG…GSGG and GAPG…GGRG. Basic residues predominate over residues 390–401; the sequence is RPGRQRKSKRAK. Residues 514–686 form the tr-type G domain; the sequence is IRPPVVTVMG…IILTADASLD (173 aa). The interval 523-530 is G1; it reads GHVDHGKT. 523–530 contacts GTP; it reads GHVDHGKT. A G2 region spans residues 548–552; that stretch reads GITQH. The segment at 573–576 is G3; it reads DTPG. Residues 573–577 and 627–630 each bind GTP; these read DTPGH and NKVD. The segment at 627–630 is G4; sequence NKVD. Positions 663-665 are G5; sequence SAR.

It belongs to the TRAFAC class translation factor GTPase superfamily. Classic translation factor GTPase family. IF-2 subfamily.

It localises to the cytoplasm. Its function is as follows. One of the essential components for the initiation of protein synthesis. Protects formylmethionyl-tRNA from spontaneous hydrolysis and promotes its binding to the 30S ribosomal subunits. Also involved in the hydrolysis of GTP during the formation of the 70S ribosomal complex. The protein is Translation initiation factor IF-2 of Frankia alni (strain DSM 45986 / CECT 9034 / ACN14a).